An 806-amino-acid chain; its full sequence is Hyperosmolality-gated Ca2+ permeable channel 1.8 (806 aa).

The next 10 helical transmembrane spans lie at 7-27 (IGVS…AFAV), 102-122 (IYTL…VVLV), 157-177 (KFFF…FMLY), 375-395 (LVIG…IAFV), 427-447 (FLPG…LLIM), 467-487 (YYYF…TAFE), 512-532 (ATFF…GEIL), 576-596 (FLLG…ILIF), 626-646 (VHGR…GLLA), and 650-670 (AADS…FHKY). Residues 726–786 (SSSSSSEKET…HYASAYEQSS (61 aa)) are disordered. Over residues 731-750 (SEKETHQEETPEVRVDKHET) the composition is skewed to basic and acidic residues. At threonine 735 the chain carries Phosphothreonine. Over residues 751 to 762 (QSSSPVTELGTS) the composition is skewed to polar residues. Positions 775 to 786 (SSHYASAYEQSS) are enriched in low complexity.

It belongs to the CSC1 (TC 1.A.17) family.

It is found in the golgi apparatus membrane. It localises to the cell membrane. Functionally, acts as an osmosensitive calcium-permeable cation channel. In Arabidopsis thaliana (Mouse-ear cress), this protein is Hyperosmolality-gated Ca2+ permeable channel 1.8.